Consider the following 623-residue polypeptide: MKREYQDAGGSGGGGGGMGSSEDKMMVSAAAGEGEEVDELLAALGYKVRASDMADVAQKLEQLEMAMGMGGVGAGAAPDDSFATHLATDTVHYNPTDLSSWVESMLSELNAPPPPLPPAPQLNASTSSTVTGSGGYFDLPPSVDSSSSIYALRPIPSPAGATAPADLSADSVRDPKRMRTGGSSTSSSSSSSSSLGGGARSSVVEAAPPVAAAANATPALPVVVVDTQEAGIRLVHALLACAEAVQQENLSAAEALVKQIPLLAASQGGAMRKVAAYFGEALARRVFRFRPQPDSSLLDAAFADLLHAHFYESCPYLKFAHFTANQAILEAFAGCRRVHVVDFGIKQGMQWPALLQALALRPGGPPSFRLTGVGPPQPDETDALQQVGWKLAQFAHTIRVDFQYRGLVAATLADLEPFMLQPEGEEDPNEEPEVIAVNSVFEMHRLLAQPGALEKVLGTVRAVRPRIVTVVEQEANHNSGTFLDRFTESLHYYSTMFDSLEGGSSGGGPSEVSSGAAAAPAAAGTDQVMSEVYLGRQICNVVACEGAERTERHETLGQWRNRLGNAGFETVHLGSNAYKQASTLLALFAGGDGYKVEEKEGCLTLGWHTRPLIATSAWRLAGP.

Residues 1–27 (MKREYQDAGGSGGGGGGMGSSEDKMMV) are disordered. Residues 9-19 (GGSGGGGGGMG) show a composition bias toward gly residues. The DELLA motif motif lies at 38–42 (DELLA). 2 disordered regions span residues 109–138 (LNAPPPPLPPAPQLNASTSSTVTGSGGYFD) and 159–201 (AGAT…GARS). Pro residues predominate over residues 111-120 (APPPPLPPAP). 2 stretches are compositionally biased toward low complexity: residues 121-131 (QLNASTSSTVT) and 181-201 (GGSSTSSSSSSSSSLGGGARS). Residues 225-619 (VDTQEAGIRL…RPLIATSAWR (395 aa)) enclose the GRAS domain. The leucine repeat I (LRI) stretch occupies residues 232–288 (IRLVHALLACAEAVQQENLSAAEALVKQIPLLAASQGGAMRKVAAYFGEALARRVFR). Positions 239–243 (LACAE) match the LxCxE motif motif. A VHIID region spans residues 307–372 (HAHFYESCPY…GGPPSFRLTG (66 aa)). The VHIID signature appears at 338–342 (VHVVD). The interval 386–425 (QVGWKLAQFAHTIRVDFQYRGLVAATLADLEPFMLQPEGE) is leucine repeat II (LRII). Positions 435-540 (IAVNSVFEMH…EVYLGRQICN (106 aa)) are PFYRE. Residues 543 to 619 (ACEGAERTER…RPLIATSAWR (77 aa)) form an SAW region.

Belongs to the GRAS family. DELLA subfamily. Post-translationally, phosphorylated. Ubiquitinated. Upon GA application it is ubiquitinated, leading to its subsequent degradation.

It is found in the nucleus. Probable transcriptional regulator that acts as a repressor of the gibberellin (GA) signaling pathway. Probably acts by participating in large multiprotein complexes that repress transcription of GA-inducible genes. Upon GA application, it is degraded by the proteasome, allowing the GA signaling pathway. This is DELLA protein RHT-1 (RHT1) from Triticum aestivum (Wheat).